The chain runs to 317 residues: Homoserine O-succinyltransferase (317 aa).

Residue C142 is the Acyl-thioester intermediate of the active site. Residues K163 and S192 each coordinate substrate. H235 serves as the catalytic Proton acceptor. The active site involves E237. R249 serves as a coordination point for substrate.

This sequence belongs to the MetA family.

It localises to the cytoplasm. It catalyses the reaction L-homoserine + succinyl-CoA = O-succinyl-L-homoserine + CoA. Its pathway is amino-acid biosynthesis; L-methionine biosynthesis via de novo pathway; O-succinyl-L-homoserine from L-homoserine: step 1/1. In terms of biological role, transfers a succinyl group from succinyl-CoA to L-homoserine, forming succinyl-L-homoserine. The chain is Homoserine O-succinyltransferase from Aeromonas hydrophila subsp. hydrophila (strain ATCC 7966 / DSM 30187 / BCRC 13018 / CCUG 14551 / JCM 1027 / KCTC 2358 / NCIMB 9240 / NCTC 8049).